The chain runs to 224 residues: Probable GTP-binding protein EngB (224 aa).

In terms of domain architecture, EngB-type G spans 27–201 (SGIEVAFAGR…DAIICQWLEQ (175 aa)). GTP contacts are provided by residues 35 to 42 (GRSNAGKS), 62 to 66 (GRTQL), 80 to 83 (DLPG), 147 to 150 (TKCD), and 180 to 182 (FSS). Mg(2+)-binding residues include Ser42 and Thr64. The segment at 205-224 (EYELPEEDDFDDSDEFTEEE) is disordered.

It belongs to the TRAFAC class TrmE-Era-EngA-EngB-Septin-like GTPase superfamily. EngB GTPase family. The cofactor is Mg(2+).

Necessary for normal cell division and for the maintenance of normal septation. This chain is Probable GTP-binding protein EngB, found in Colwellia psychrerythraea (strain 34H / ATCC BAA-681) (Vibrio psychroerythus).